The following is a 455-amino-acid chain: MASFSILSIFKIGVGPSSSHTIGPMEAGARFCGLLKGILEQVERVQITLHGSLALTGKGHLSDEAVLIGLHGIYANELDITTKKALLHEAFENKVLKLANQHHIPFDYAKDLIFDNKPLARHQNALILKAFNAKNEVLKEETYYSVGGGFVYTEKELDNLSEEGENESVAYDFSSAKELLELCQKHQKSIAEIVRLRENALKNHPDATMTKIYHAMLECYHNGANSKERYLPGSLKVTRLAPSVKTRLEKHPTSGKDPLALIDYISLYARSIAEENASGGKVVTAPTNGACAVVPSVLSYAKNHLFENLSQKSINDFLLTSAAIGYLYKKNASLSGAEAGCQAEIGVASSMAAGGLAHLCQATTQQVLIASEIAMEHHLGLTCDPVGGLVQIPCIERNVLGAIKAISASKLALEDEYKPKVSLDEVIATMYATGKDMNEKYKETSLGGLAKTLKC.

This sequence belongs to the iron-sulfur dependent L-serine dehydratase family. The cofactor is [4Fe-4S] cluster.

The enzyme catalyses L-serine = pyruvate + NH4(+). It functions in the pathway carbohydrate biosynthesis; gluconeogenesis. In Helicobacter pylori (strain J99 / ATCC 700824) (Campylobacter pylori J99), this protein is L-serine dehydratase (sdaA).